The primary structure comprises 819 residues: DNA topoisomerase 4 subunit A (819 aa).

In terms of domain architecture, Topo IIA-type catalytic spans 30 to 496 (LPDIRDGLKP…QIIEIDTASL (467 aa)). Y118 serves as the catalytic O-(5'-phospho-DNA)-tyrosine intermediate.

The protein belongs to the type II topoisomerase GyrA/ParC subunit family. ParC type 2 subfamily. In terms of assembly, heterotetramer composed of ParC and ParE.

Its subcellular location is the cell membrane. The catalysed reaction is ATP-dependent breakage, passage and rejoining of double-stranded DNA.. Its function is as follows. Topoisomerase IV is essential for chromosome segregation. It relaxes supercoiled DNA. Performs the decatenation events required during the replication of a circular DNA molecule. The chain is DNA topoisomerase 4 subunit A from Streptococcus pyogenes serotype M18 (strain MGAS8232).